The sequence spans 327 residues: Eukaryotic translation initiation factor 3 subunit I (327 aa).

WD repeat units follow at residues Gly-8–Asp-49, His-51–Thr-89, Val-188–Gln-227, Lys-229–Glu-268, and Gly-285–Thr-324.

The protein belongs to the eIF-3 subunit I family. As to quaternary structure, component of the eukaryotic translation initiation factor 3 (eIF-3) complex.

It is found in the cytoplasm. Component of the eukaryotic translation initiation factor 3 (eIF-3) complex, which is involved in protein synthesis of a specialized repertoire of mRNAs and, together with other initiation factors, stimulates binding of mRNA and methionyl-tRNAi to the 40S ribosome. The eIF-3 complex specifically targets and initiates translation of a subset of mRNAs involved in cell proliferation. This chain is Eukaryotic translation initiation factor 3 subunit I, found in Caenorhabditis elegans.